The chain runs to 500 residues: Glycerol kinase (500 aa).

An ADP-binding site is contributed by Thr13. Thr13, Thr14, and Ser15 together coordinate ATP. Thr13 provides a ligand contact to sn-glycerol 3-phosphate. Arg17 provides a ligand contact to ADP. Sn-glycerol 3-phosphate contacts are provided by Arg83, Glu84, Tyr135, and Asp244. The glycerol site is built by Arg83, Glu84, Tyr135, Asp244, and Gln245. Thr266 and Gly309 together coordinate ADP. Thr266, Gly309, Gln313, and Gly410 together coordinate ATP. Residues Gly410 and Asn414 each coordinate ADP.

This sequence belongs to the FGGY kinase family.

It carries out the reaction glycerol + ATP = sn-glycerol 3-phosphate + ADP + H(+). The protein operates within polyol metabolism; glycerol degradation via glycerol kinase pathway; sn-glycerol 3-phosphate from glycerol: step 1/1. Inhibited by fructose 1,6-bisphosphate (FBP). Key enzyme in the regulation of glycerol uptake and metabolism. Catalyzes the phosphorylation of glycerol to yield sn-glycerol 3-phosphate. This Burkholderia ambifaria (strain MC40-6) protein is Glycerol kinase.